Consider the following 417-residue polypeptide: Tryptophan synthase beta chain (417 aa).

Position 110 is an N6-(pyridoxal phosphate)lysine (Lys-110).

It belongs to the TrpB family. In terms of assembly, tetramer of two alpha and two beta chains. Pyridoxal 5'-phosphate serves as cofactor.

The enzyme catalyses (1S,2R)-1-C-(indol-3-yl)glycerol 3-phosphate + L-serine = D-glyceraldehyde 3-phosphate + L-tryptophan + H2O. It participates in amino-acid biosynthesis; L-tryptophan biosynthesis; L-tryptophan from chorismate: step 5/5. In terms of biological role, the beta subunit is responsible for the synthesis of L-tryptophan from indole and L-serine. The protein is Tryptophan synthase beta chain of Prochlorococcus marinus (strain NATL2A).